We begin with the raw amino-acid sequence, 569 residues long: Phospholipase B-like protein D (569 aa).

The signal sequence occupies residues methionine 1–cysteine 22. 5 N-linked (GlcNAc...) asparagine glycosylation sites follow: asparagine 93, asparagine 126, asparagine 181, asparagine 425, and asparagine 430.

The protein belongs to the phospholipase B-like family.

Its subcellular location is the secreted. Its function is as follows. Probable phospholipase. The sequence is that of Phospholipase B-like protein D (plbD) from Dictyostelium discoideum (Social amoeba).